The chain runs to 98 residues: Small ribosomal subunit protein bS20 (98 aa).

Positions 76–98 (HPNNGARKKSRLASKLKPIEQTA) are disordered.

It belongs to the bacterial ribosomal protein bS20 family.

In terms of biological role, binds directly to 16S ribosomal RNA. The chain is Small ribosomal subunit protein bS20 from Trichormus variabilis (strain ATCC 29413 / PCC 7937) (Anabaena variabilis).